Reading from the N-terminus, the 552-residue chain is Alpha-galactosidase (552 aa).

Substrate-binding positions include tryptophan 65, tyrosine 191, 220–221 (DD), 325–327 (KID), cysteine 368, and arginine 383. The active-site Nucleophile is aspartate 327. Aspartate 387 acts as the Proton donor/acceptor in catalysis.

Belongs to the glycosyl hydrolase 36 family. Homodimer.

The catalysed reaction is Hydrolysis of terminal, non-reducing alpha-D-galactose residues in alpha-D-galactosides, including galactose oligosaccharides, galactomannans and galactolipids.. Inhibited by hydrolysis product alpha-galactopyranose and to a lesser extent by beta-galactopyranose, its mutarotational product. Inhibited by synthetic cyclopropyl carbasugars. In terms of biological role, hydrolyzes the short-chain alpha-galactosaccharides raffinose, melibiose and stachyose. This Thermotoga maritima (strain ATCC 43589 / DSM 3109 / JCM 10099 / NBRC 100826 / MSB8) protein is Alpha-galactosidase.